A 262-amino-acid chain; its full sequence is Small ribosomal subunit protein eS4 (262 aa).

One can recognise an S4 RNA-binding domain in the interval 42-105 (LPLXVFLRNR…NEHFRLAYDV (64 aa)).

The protein belongs to the eukaryotic ribosomal protein eS4 family.

In Candida albicans (Yeast), this protein is Small ribosomal subunit protein eS4 (RPS4).